The primary structure comprises 468 residues: ATP synthase subunit beta 1 (468 aa).

155–162 (GGAGVGKT) contributes to the ATP binding site.

The protein belongs to the ATPase alpha/beta chains family. In terms of assembly, F-type ATPases have 2 components, CF(1) - the catalytic core - and CF(0) - the membrane proton channel. CF(1) has five subunits: alpha(3), beta(3), gamma(1), delta(1), epsilon(1). CF(0) has three main subunits: a(1), b(2) and c(9-12). The alpha and beta chains form an alternating ring which encloses part of the gamma chain. CF(1) is attached to CF(0) by a central stalk formed by the gamma and epsilon chains, while a peripheral stalk is formed by the delta and b chains.

The protein resides in the cell inner membrane. The catalysed reaction is ATP + H2O + 4 H(+)(in) = ADP + phosphate + 5 H(+)(out). In terms of biological role, produces ATP from ADP in the presence of a proton gradient across the membrane. The catalytic sites are hosted primarily by the beta subunits. In Syntrophotalea carbinolica (strain DSM 2380 / NBRC 103641 / GraBd1) (Pelobacter carbinolicus), this protein is ATP synthase subunit beta 1.